A 350-amino-acid polypeptide reads, in one-letter code: MAFHGKDDVLDIKAQAHVWKIIYGFADSLVLRCAVELGIVDIIDNNNQPMALADLASKLPVSDVNCDNLYRILRYLVKMEILRVEKSDDGQKKYALEPIATLLSRNAKRSMVPMILGMTQKDFMTPWHSMKDGLSDNGTAFEKAMGMTIWEYLEGHPDQSQLFNEGMAGETRLLTSSLISGSRDMFQGIDSLVDVGGGNGTTVKAISDAFPHIKCTLFDLPHVIANSYDLPNIERIGGDMFKSVPSAQAIILKLILHDWNDEDSIKILKQCRNAVPKDGGKVIIVDVALDEESDHELSSTRLILDIDMLVNTGGKERTKEVWEKIVKSAGFSGCKIRHIAAIQSVIEVFP.

The S-adenosyl-L-methionine site is built by glycine 196, aspartate 219, aspartate 239, methionine 240, and lysine 253. Histidine 257 (proton acceptor) is an active-site residue.

The protein belongs to the class I-like SAM-binding methyltransferase superfamily. Cation-independent O-methyltransferase family. COMT subfamily. In terms of assembly, homodimer.

The catalysed reaction is (S)-3'-hydroxy-N-methylcoclaurine + S-adenosyl-L-methionine = (S)-reticuline + S-adenosyl-L-homocysteine + H(+). Its pathway is alkaloid biosynthesis; (S)-reticuline biosynthesis; (S)-reticuline from (S)-norcoclaurine: step 4/4. Its function is as follows. Catalyzes the transfer of the methyl group to the 4'-hydroxyl group of 3'-hydroxy-N-methylcoclaurine to form reticuline. The sequence is that of 3'-hydroxy-N-methyl-(S)-coclaurine 4'-O-methyltransferase from Coptis japonica (Japanese goldthread).